A 615-amino-acid chain; its full sequence is UvrABC system protein C (615 aa).

Residues 14–91 enclose the GIY-YIG domain; sequence TSPGCYIHKD…IKENKPKYNI (78 aa). Residues 196–231 enclose the UVR domain; sequence NKIIDELKGKMAAAAQTMEFERAAEYRDLIQAIGTL.

This sequence belongs to the UvrC family. As to quaternary structure, interacts with UvrB in an incision complex.

Its subcellular location is the cytoplasm. The UvrABC repair system catalyzes the recognition and processing of DNA lesions. UvrC both incises the 5' and 3' sides of the lesion. The N-terminal half is responsible for the 3' incision and the C-terminal half is responsible for the 5' incision. The polypeptide is UvrABC system protein C (Streptococcus pneumoniae (strain ATCC 700669 / Spain 23F-1)).